A 529-amino-acid polypeptide reads, in one-letter code: UDP-glucuronosyltransferase 2B18 (529 aa).

The N-terminal stretch at 1–21 is a signal peptide; the sequence is MSVKWTSVILLIQLSFYFSSG. N-linked (GlcNAc...) asparagine glycosylation is found at N67 and N68. The chain crosses the membrane as a helical span at residues 493–513; that stretch reads VIGFLLACVATVIFIIMKCCL.

Belongs to the UDP-glycosyltransferase family. Expressed in liver, prostate, kidney, testis, adrenal, bile duct, bladder, colon, small intestine, cerebellum and pancreas.

Its subcellular location is the microsome membrane. The protein localises to the endoplasmic reticulum membrane. The enzyme catalyses glucuronate acceptor + UDP-alpha-D-glucuronate = acceptor beta-D-glucuronoside + UDP + H(+). Functionally, UDPGT is of major importance in the conjugation and subsequent elimination of potentially toxic xenobiotics and endogenous compounds. This isozyme displays activity toward 3-hydroxyandrogens. It is principally active on C19 steroids having a hydroxyl group at position 3-alpha of the steroid molecule and also active on planar phenols and bile acids. The sequence is that of UDP-glucuronosyltransferase 2B18 (UGT2B18) from Macaca fascicularis (Crab-eating macaque).